The sequence spans 76 residues: Omega-conotoxin-like TxMKLT1-0141 (76 aa).

The N-terminal stretch at 1 to 22 (MKLTCMMIVAVLFLTAWTFATA) is a signal peptide. A propeptide spanning residues 23–50 (DDSSNGLENLFPKAHHEMKNPEASKLNE) is cleaved from the precursor. 3 disulfide bridges follow: Cys-52–Cys-67, Cys-59–Cys-70, and Cys-66–Cys-75.

Belongs to the conotoxin O1 superfamily. Expressed by the venom duct.

The protein resides in the secreted. Functionally, omega-conotoxins act at presynaptic membranes, they bind and block voltage-gated calcium channels (Cav). This Conus textile (Cloth-of-gold cone) protein is Omega-conotoxin-like TxMKLT1-0141.